A 66-amino-acid polypeptide reads, in one-letter code: Phylloseptin-B1 (66 aa).

An N-terminal signal peptide occupies residues 1-22; the sequence is MAFLKKSLFLVLFLGLVSLSIC. The propeptide occupies 23–46; the sequence is EEEKRETEEKEYDQGEDDKSEEKR. Leucine amide is present on leucine 65.

Belongs to the frog skin active peptide (FSAP) family. Phylloseptin subfamily. As to expression, expressed by the skin glands.

The protein localises to the secreted. It is found in the target cell membrane. Functionally, antimicrobial peptide with activity against only a few strains of Gram-positive bacteria (S.aureus and B.megaterium). Acts in a synergistic effect in combination with Plasticin-B1 at doses that are not active alone. In Phyllomedusa bicolor (Two-colored leaf frog), this protein is Phylloseptin-B1.